The chain runs to 71 residues: Translational regulator CsrA (71 aa).

This sequence belongs to the CsrA/RsmA family. As to quaternary structure, homodimer; the beta-strands of each monomer intercalate to form a hydrophobic core, while the alpha-helices form wings that extend away from the core.

The protein localises to the cytoplasm. In terms of biological role, a translational regulator that binds mRNA to regulate translation initiation and/or mRNA stability. Usually binds in the 5'-UTR at or near the Shine-Dalgarno sequence preventing ribosome-binding, thus repressing translation. Its main target seems to be the major flagellin gene, while its function is anatagonized by FliW. The sequence is that of Translational regulator CsrA from Clostridium botulinum (strain Alaska E43 / Type E3).